The primary structure comprises 95 residues: MANQSSTGSAGRFGARYGRVSRRRVSDIEGTMNEDHACPDCGSEAVSREGTGIWQCGKCGYKYAGGAYQPQTPSGKTVTRSIRTALGETGDSNSE.

The C4-type zinc finger occupies 38-59 (CPDCGSEAVSREGTGIWQCGKC).

The protein belongs to the eukaryotic ribosomal protein eL43 family. Zn(2+) serves as cofactor.

The protein is Large ribosomal subunit protein eL43 of Halobacterium salinarum (strain ATCC 29341 / DSM 671 / R1).